We begin with the raw amino-acid sequence, 503 residues long: TGF-beta receptor type-1 (503 aa).

The first 29 residues, 1–29 (MEVAAGAPRSRLLLFVLAATATLAPEATA), serve as a signal peptide directing secretion. Residues 30 to 126 (FQCFCHLCTK…PPSGLGPVEL (97 aa)) are Extracellular-facing. Intrachain disulfides connect Cys32–Cys50, Cys34–Cys37, Cys44–Cys67, Cys82–Cys96, and Cys97–Cys102. A glycan (N-linked (GlcNAc...) asparagine) is linked at Asn41. Residues 127 to 147 (AAVIAGPVCFVCISLMLMVYI) traverse the membrane as a helical segment. The Cytoplasmic segment spans residues 148 to 503 (CHNRTVIHHR…QLSQQEGIKM (356 aa)). A Phosphoserine modification is found at Ser165. Residues 175-204 (TTLKDLIYDMTTSGSGSGLPLLVQRTIART) form the GS domain. 2 positions are modified to phosphothreonine; by TGFBR2: Thr185 and Thr186. 3 positions are modified to phosphoserine; by TGFBR2: Ser187, Ser189, and Ser191. An FKBP1A-binding motif is present at residues 193-194 (LP). The region spanning 205–495 (IVLQESIGKG…LRIKKTLSQL (291 aa)) is the Protein kinase domain. ATP is bound by residues 211–219 (IGKGRFGEV) and Lys232. Asp333 serves as the catalytic Proton acceptor. A Glycyl lysine isopeptide (Lys-Gly) (interchain with G-Cter in SUMO) cross-link involves residue Lys391.

The protein belongs to the protein kinase superfamily. TKL Ser/Thr protein kinase family. TGFB receptor subfamily. In terms of assembly, homodimer; in the endoplasmic reticulum but also at the cell membrane. Heterohexamer; TGFB1, TGFB2 and TGFB3 homodimeric ligands assemble a functional receptor composed of two TGFBR1 and TGFBR2 heterodimers to form a ligand-receptor heterohexamer. The respective affinity of TGBRB1 and TGFBR2 for the ligands may modulate the kinetics of assembly of the receptor and may explain the different biological activities of TGFB1, TGFB2 and TGFB3. Component of a complex composed of TSC22D1 (via N-terminus), TGFBR1 and TGFBR2; the interaction between TSC22D1 and TGFBR1 is inhibited by SMAD7 and promoted by TGFB1. Interacts with CD109; inhibits TGF-beta receptor activation in keratinocytes. Interacts with RBPMS. Interacts (unphosphorylated) with FKBP1A; prevents TGFBR1 phosphorylation by TGFBR2 and stabilizes it in the inactive conformation. Interacts with SMAD2, SMAD3 and ZFYVE9; ZFYVE9 recruits SMAD2 and SMAD3 to the TGF-beta receptor. Interacts with TRAF6 and MAP3K7; induces MAP3K7 activation by TRAF6. Interacts with PARD6A; involved in TGF-beta induced epithelial to mesenchymal transition. Interacts with NEDD4L. Interacts with SMAD7, SMURF1 and SMURF2; SMAD7 recruits NEDD4L, SMURF1 and SMURF2 to the TGF-beta receptor. Interacts with USP15 and VPS39. Interacts with SDCBP (via C-terminus). Interacts with CAV1 and this interaction is impaired in the presence of SDCBP. Interacts with APPL1; interaction is TGF beta dependent; mediates trafficking of the TGFBR1 from the endosomes to the nucleus via microtubules in a TRAF6-dependent manner. Interacts with GPR50; this interaction promotes the constitutive activation of SMAD signaling pathway. Mg(2+) serves as cofactor. It depends on Mn(2+) as a cofactor. In terms of processing, phosphorylated at basal levels in the absence of ligand. Activated upon phosphorylation by TGFBR2, mainly in the GS domain. Phosphorylation in the GS domain abrogates FKBP1A-binding. Post-translationally, N-Glycosylated. Ubiquitinated; undergoes ubiquitination catalyzed by several E3 ubiquitin ligases including SMURF1, SMURF2 and NEDD4L2. Results in the proteasomal and/or lysosomal degradation of the receptor thereby negatively regulating its activity. Deubiquitinated by USP15, leading to stabilization of the protein and enhanced TGF-beta signal. Its ubiquitination and proteasome-mediated degradation is negatively regulated by SDCBP.

The protein resides in the cell membrane. Its subcellular location is the cell junction. The protein localises to the tight junction. It localises to the membrane raft. It is found in the cell surface. The enzyme catalyses L-threonyl-[receptor-protein] + ATP = O-phospho-L-threonyl-[receptor-protein] + ADP + H(+). The catalysed reaction is L-seryl-[receptor-protein] + ATP = O-phospho-L-seryl-[receptor-protein] + ADP + H(+). With respect to regulation, kept in an inactive conformation by FKBP1A preventing receptor activation in absence of ligand. CD109 is another inhibitor of the receptor. Transmembrane serine/threonine kinase forming with the TGF-beta type II serine/threonine kinase receptor, TGFBR2, the non-promiscuous receptor for the TGF-beta cytokines TGFB1, TGFB2 and TGFB3. Transduces the TGFB1, TGFB2 and TGFB3 signal from the cell surface to the cytoplasm and is thus regulating a plethora of physiological and pathological processes including cell cycle arrest in epithelial and hematopoietic cells, control of mesenchymal cell proliferation and differentiation, wound healing, extracellular matrix production, immunosuppression and carcinogenesis. The formation of the receptor complex composed of 2 TGFBR1 and 2 TGFBR2 molecules symmetrically bound to the cytokine dimer results in the phosphorylation and the activation of TGFBR1 by the constitutively active TGFBR2. Activated TGFBR1 phosphorylates SMAD2 which dissociates from the receptor and interacts with SMAD4. The SMAD2-SMAD4 complex is subsequently translocated to the nucleus where it modulates the transcription of the TGF-beta-regulated genes. This constitutes the canonical SMAD-dependent TGF-beta signaling cascade. Also involved in non-canonical, SMAD-independent TGF-beta signaling pathways. For instance, TGFBR1 induces TRAF6 autoubiquitination which in turn results in MAP3K7 ubiquitination and activation to trigger apoptosis. Also regulates epithelial to mesenchymal transition through a SMAD-independent signaling pathway through PARD6A phosphorylation and activation. This chain is TGF-beta receptor type-1 (TGFBR1), found in Sus scrofa (Pig).